The chain runs to 310 residues: Acetyl-coenzyme A carboxylase carboxyl transferase subunit beta (310 aa).

The CoA carboxyltransferase N-terminal domain occupies 27-296 (LWKKCPKCSA…PEFENEEELE (270 aa)). 4 residues coordinate Zn(2+): Cys-31, Cys-34, Cys-50, and Cys-53. A C4-type zinc finger spans residues 31–53 (CPKCSAVLYRPELEKNLDVCPKC). A disordered region spans residues 285-310 (PEPEFENEEELEEEEMERPEPPDNVE). Over residues 287 to 310 (PEFENEEELEEEEMERPEPPDNVE) the composition is skewed to acidic residues.

Belongs to the AccD/PCCB family. Acetyl-CoA carboxylase is a heterohexamer composed of biotin carboxyl carrier protein (AccB), biotin carboxylase (AccC) and two subunits each of ACCase subunit alpha (AccA) and ACCase subunit beta (AccD). Zn(2+) serves as cofactor.

The protein resides in the cytoplasm. The enzyme catalyses N(6)-carboxybiotinyl-L-lysyl-[protein] + acetyl-CoA = N(6)-biotinyl-L-lysyl-[protein] + malonyl-CoA. Its pathway is lipid metabolism; malonyl-CoA biosynthesis; malonyl-CoA from acetyl-CoA: step 1/1. Its function is as follows. Component of the acetyl coenzyme A carboxylase (ACC) complex. Biotin carboxylase (BC) catalyzes the carboxylation of biotin on its carrier protein (BCCP) and then the CO(2) group is transferred by the transcarboxylase to acetyl-CoA to form malonyl-CoA. The protein is Acetyl-coenzyme A carboxylase carboxyl transferase subunit beta of Hahella chejuensis (strain KCTC 2396).